The primary structure comprises 336 residues: Secreted effector protein SifA (336 aa).

Positions 1-330 are interaction with host PLEKHM2; the sequence is MPITIGNGFL…LHVRSEQQSG (330 aa).

It belongs to the Sif family. In terms of assembly, interacts with host PLEKHM2. Interacts with SseJ; the interaction is indirect.

The protein localises to the secreted. It localises to the host cytoplasm. The protein resides in the host cell membrane. Functionally, effector proteins function to alter host cell physiology and promote bacterial survival in host tissues. This protein is required for endosomal tubulation and formation of Salmonella-induced filaments (Sifs), which are filamentous structures containing lysosomal membrane glycoproteins within epithelial cells. Sif formation is concomitant with intracellular bacterial replication. In Salmonella typhimurium (strain LT2 / SGSC1412 / ATCC 700720), this protein is Secreted effector protein SifA (sifA).